Reading from the N-terminus, the 350-residue chain is DNA-directed RNA polymerase subunit alpha (350 aa).

The interval 1–226 is alpha N-terminal domain (alpha-NTD); the sequence is MLISQRPTLS…ELFGLARELN (226 aa). Positions 241–350 are alpha C-terminal domain (alpha-CTD); that stretch reads ADHIASFALP…NQDYAETEQL (110 aa). Positions 328–350 are disordered; the sequence is GTWTSDAGYDLDDNQDYAETEQL. Residues 336-350 are compositionally biased toward acidic residues; that stretch reads YDLDDNQDYAETEQL.

This sequence belongs to the RNA polymerase alpha chain family. As to quaternary structure, homodimer. The RNAP catalytic core consists of 2 alpha, 1 beta, 1 beta' and 1 omega subunit. When a sigma factor is associated with the core the holoenzyme is formed, which can initiate transcription.

The catalysed reaction is RNA(n) + a ribonucleoside 5'-triphosphate = RNA(n+1) + diphosphate. Functionally, DNA-dependent RNA polymerase catalyzes the transcription of DNA into RNA using the four ribonucleoside triphosphates as substrates. In Mycolicibacterium smegmatis (strain ATCC 700084 / mc(2)155) (Mycobacterium smegmatis), this protein is DNA-directed RNA polymerase subunit alpha.